The sequence spans 242 residues: Small ribosomal subunit protein uS2 (242 aa).

Belongs to the universal ribosomal protein uS2 family.

This Shewanella baltica (strain OS223) protein is Small ribosomal subunit protein uS2.